Consider the following 147-residue polypeptide: Histone H3.X (147 aa).

A compositionally biased stretch (low complexity) spans 1–16 (MARTKQTARKATAWQA). Residues 1–43 (MARTKQTARKATAWQAPRKPLATKAARKRASPTGGIKKPHRYK) form a disordered region. Asymmetric dimethylarginine is present on Arg-3. The residue at position 3 (Arg-3) is a Citrulline; alternate. Thr-4 bears the Phosphothreonine mark. Residue Lys-5 is modified to Allysine; alternate. Lys-5 carries the N6,N6,N6-trimethyllysine; alternate modification. Residue Lys-5 is modified to N6,N6-dimethyllysine; alternate. Position 5 is an N6-(2-hydroxyisobutyryl)lysine; alternate (Lys-5). At Lys-5 the chain carries N6-(beta-hydroxybutyryl)lysine; alternate. Lys-5 bears the N6-acetyllysine; alternate mark. Lys-5 is modified (N6-crotonyllysine; alternate). Lys-5 carries the post-translational modification N6-methyllysine; alternate. Gln-6 is subject to 5-glutamyl dopamine; alternate. Position 6 is a 5-glutamyl serotonin; alternate (Gln-6). Thr-7 carries the post-translational modification Phosphothreonine. Arg-9 carries the citrulline; alternate modification. Arg-9 is subject to Symmetric dimethylarginine. The residue at position 10 (Lys-10) is an N6,N6,N6-trimethyllysine; alternate. Lys-10 carries the N6,N6-dimethyllysine; alternate modification. N6-(2-hydroxyisobutyryl)lysine; alternate is present on Lys-10. Lys-10 is subject to N6-(beta-hydroxybutyryl)lysine; alternate. Lys-10 is modified (N6-acetyllysine; alternate). At Lys-10 the chain carries N6-crotonyllysine; alternate. Residue Lys-10 is modified to N6-methyllysine; alternate. Lys-10 carries the N6-butyryllysine; alternate modification. N6-lactoyllysine; alternate is present on Lys-10. Residue Thr-12 is modified to Phosphothreonine. The residue at position 18 (Arg-18) is an Asymmetric dimethylarginine. Position 18 is a citrulline; alternate (Arg-18). Residues Lys-19 and Lys-24 each carry the N6-(2-hydroxyisobutyryl)lysine; alternate modification. 2 positions are modified to N6-(beta-hydroxybutyryl)lysine; alternate: Lys-19 and Lys-24. N6-acetyllysine; alternate occurs at positions 19 and 24. N6-crotonyllysine; alternate is present on residues Lys-19 and Lys-24. N6-methyllysine; alternate occurs at positions 19 and 24. 2 positions are modified to N6-butyryllysine; alternate: Lys-19 and Lys-24. N6-lactoyllysine; alternate occurs at positions 19 and 24. N6-glutaryllysine; alternate is present on residues Lys-19 and Lys-24. Citrulline is present on Arg-27. Residues Lys-28 and Lys-37 each carry the N6,N6,N6-trimethyllysine; alternate modification. Lys-28 and Lys-37 each carry N6,N6-dimethyllysine; alternate. 2 positions are modified to N6-(2-hydroxyisobutyryl)lysine; alternate: Lys-28 and Lys-37. At Lys-28 the chain carries N6-(beta-hydroxybutyryl)lysine; alternate. N6-acetyllysine; alternate occurs at positions 28 and 37. The residue at position 28 (Lys-28) is an N6-crotonyllysine; alternate. Lys-28 and Lys-37 each carry N6-methyllysine; alternate. Residue Lys-28 is modified to N6-lactoyllysine; alternate. At Lys-28 the chain carries N6-glutaryllysine; alternate. Residue Lys-38 is modified to N6-methyllysine. Tyr-42 is modified (phosphotyrosine). Position 57 is an N6,N6,N6-trimethyllysine; alternate (Lys-57). N6-(2-hydroxyisobutyryl)lysine; alternate is present on Lys-57. Lys-57 carries the post-translational modification N6-(beta-hydroxybutyryl)lysine; alternate. An N6-acetyllysine; alternate modification is found at Lys-57. N6-crotonyllysine; alternate is present on Lys-57. An N6-lactoyllysine; alternate modification is found at Lys-57. Position 57 is an N6-glutaryllysine; alternate (Lys-57). N6-methyllysine is present on Lys-57. Lys-57 carries the post-translational modification N6-succinyllysine; alternate. The residue at position 58 (Ser-58) is a Phosphoserine. N6-(2-hydroxyisobutyryl)lysine; alternate is present on Lys-65. Lys-65 is subject to N6-methyllysine; alternate. Ser-87 is subject to Phosphoserine. Thr-108 is modified (phosphothreonine).

This sequence belongs to the histone H3 family. As to quaternary structure, the nucleosome is a histone octamer containing two molecules each of H2A, H2B, H3 and H4 assembled in one H3-H4 heterotetramer and two H2A-H2B heterodimers. The octamer wraps approximately 147 bp of DNA. In terms of processing, acetylation is generally linked to gene activation. Acetylation on Lys-10 (H3K9ac) impairs methylation at Arg-9 (H3R8me2s). Acetylation on Lys-19 (H3K18ac) and Lys-24 (H3K24ac) favors methylation at Arg-18 (H3R17me). Post-translationally, citrullination at Arg-9 (H3R8ci) and/or Arg-18 (H3R17ci) impairs methylation and represses transcription. Asymmetric dimethylation at Arg-18 (H3R17me2a) is linked to gene activation. Symmetric dimethylation at Arg-9 (H3R8me2s) is linked to gene repression. Asymmetric dimethylation at Arg-3 (H3R2me2a) is linked to gene repression and is mutually exclusive with H3 Lys-5 methylation (H3K4me2 and H3K4me3). H3R2me2a is present at the 3' of genes regardless of their transcription state and is enriched on inactive promoters, while it is absent on active promoters. In terms of processing, methylation at Lys-5 (H3K4me) facilitates subsequent acetylation of H3 and H4. Methylation at Lys-10 (H3K9me) and Lys-28 (H3K27me), which are linked to gene repression, are underrepresented. Methylation at Lys-10 (H3K9me) is a specific target for HP1 proteins (CBX1, CBX3 and CBX5) and prevents subsequent acetylation of H3 and H4. Post-translationally, phosphorylation at Thr-7 (H3T6ph) is a specific tag for epigenetic transcriptional activation that prevents demethylation of Lys-5 (H3K4me) by LSD1/KDM1A. At centromeres, specifically phosphorylated at Thr-12 (H3T11ph) from prophase to early anaphase. Phosphorylation at Thr-12 (H3T11ph) is a specific tag for epigenetic transcriptional activation that promotes demethylation of Lys-10 (H3K9me). Phosphorylation at Tyr-42 (H3Y41ph) promotes exclusion of CBX5 (HP1 alpha) from chromatin. Lysine deamination at Lys-5 (H3K4all) to form allysine. Allysine formation only takes place on H3K4me3 and results in gene repression. In terms of processing, crotonylation (Kcr) is specifically present in male germ cells and marks testis-specific genes in post-meiotic cells, including X-linked genes that escape sex chromosome inactivation in haploid cells. Crotonylation marks active promoters and enhancers and confers resistance to transcriptional repressors. It is also associated with post-meiotically activated genes on autosomes. Post-translationally, butyrylation of histones marks active promoters and competes with histone acetylation. It is present during late spermatogenesis. Expressed at low level in some tissues, such as testis and brain.

The protein resides in the nucleus. The protein localises to the chromosome. Its function is as follows. Primate-specific variant histone H3, which constitutes a core component of nucleosomes. Nucleosomes wrap and compact DNA into chromatin, limiting DNA accessibility to the cellular machineries which require DNA as a template. Histones thereby play a central role in transcription regulation, DNA repair, DNA replication and chromosomal stability. DNA accessibility is regulated via a complex set of post-translational modifications of histones, also called histone code, and nucleosome remodeling. The sequence is that of Histone H3.X from Homo sapiens (Human).